Consider the following 491-residue polypeptide: Transmembrane protein 39B (491 aa).

A disordered region spans residues 1-56 (MAGGRRGANRTTYCRSPLSNDTGSVGNGNHSTSSPVTGVRSRTRNGSGTGMSSPPL). Asn9, Asn20, Asn29, and Asn45 each carry an N-linked (GlcNAc...) asparagine glycan. 2 stretches are compositionally biased toward polar residues: residues 9–36 (NRTT…SSPV) and 44–56 (RNGS…SPPL). 8 helical membrane-spanning segments follow: residues 79 to 99 (LFEL…YVNI), 115 to 135 (TSLN…IVLA), 152 to 172 (LSFP…TLAG), 185 to 205 (TYSV…IPFF), 290 to 310 (EVLV…VWFV), 322 to 342 (CELF…HLLP), 423 to 443 (ILNI…YSLM), and 449 to 469 (HQTI…FKLL).

This sequence belongs to the TMEM39 family. Expressed in the ovary, followed by the intestine and brain.

The protein resides in the endoplasmic reticulum membrane. Functionally, may protect the cells against DNA damage caused by exposure to the cold-warming stress and facilitates tissue damage repair during the recovery phase. This is Transmembrane protein 39B from Danio rerio (Zebrafish).